The chain runs to 325 residues: MATH domain and coiled-coil domain-containing protein At3g58430 (325 aa).

The 126-residue stretch at 6–131 folds into the MATH domain; sequence HKKFCWIIKN…KGDFKIIAEV (126 aa). Residues 258-306 are a coiled coil; it reads FKVDWLEKKLDQVKDKKEREQSGLARLHELEEYLLKLKQKCSNLDLLVE.

This Arabidopsis thaliana (Mouse-ear cress) protein is MATH domain and coiled-coil domain-containing protein At3g58430.